A 248-amino-acid polypeptide reads, in one-letter code: tRNA pseudouridine synthase A (248 aa).

The Nucleophile role is filled by aspartate 53. Residue tyrosine 111 coordinates substrate.

The protein belongs to the tRNA pseudouridine synthase TruA family. Homodimer.

The catalysed reaction is uridine(38/39/40) in tRNA = pseudouridine(38/39/40) in tRNA. In terms of biological role, formation of pseudouridine at positions 38, 39 and 40 in the anticodon stem and loop of transfer RNAs. The polypeptide is tRNA pseudouridine synthase A (Listeria welshimeri serovar 6b (strain ATCC 35897 / DSM 20650 / CCUG 15529 / CIP 8149 / NCTC 11857 / SLCC 5334 / V8)).